A 140-amino-acid chain; its full sequence is Nucleoside triphosphatase NudI (140 aa).

One can recognise a Nudix hydrolase domain in the interval 1–140 (MRHRTIVCPL…RVTLSLKGLL (140 aa)). The Nudix box signature appears at 38–58 (GVEPGERIEEALRREIREELG).

This sequence belongs to the Nudix hydrolase family. NudI subfamily. As to quaternary structure, monomer. Requires Mg(2+) as cofactor.

The catalysed reaction is a ribonucleoside 5'-triphosphate + H2O = a ribonucleoside 5'-phosphate + diphosphate + H(+). It carries out the reaction a 2'-deoxyribonucleoside 5'-triphosphate + H2O = a 2'-deoxyribonucleoside 5'-phosphate + diphosphate + H(+). The enzyme catalyses dUTP + H2O = dUMP + diphosphate + H(+). It catalyses the reaction dTTP + H2O = dTMP + diphosphate + H(+). The catalysed reaction is dCTP + H2O = dCMP + diphosphate + H(+). Its function is as follows. Catalyzes the hydrolysis of nucleoside triphosphates, with a preference for pyrimidine deoxynucleoside triphosphates (dUTP, dTTP and dCTP). In Klebsiella pneumoniae subsp. pneumoniae (strain ATCC 700721 / MGH 78578), this protein is Nucleoside triphosphatase NudI.